A 339-amino-acid polypeptide reads, in one-letter code: MKQPLNFTAELVPVAYAEALLDLVAEYGVSRQALFDAARVRPEVLDSPNGRLSFLDFNQLTYSAQALCGEPALGLVLGQRLNVSAHGILGYAVLSSANLGKAIQFALKYYRVLGLAYELELVLDDGRAELRAVESMPLGAASVFAAEGLMATLYSIACFLVGEPLQDVRVGFAYPPPAHARRYAEVFGVAAEFEQPWHWLSMPSEYLERPMALANPATVQMCEQQCEALLATLDVQEGLLTRVRRLLLARPGDFPDLEQAARELHTSGRSLRRHLSSLGTTYQQVLDDVRKRLALQYLTTTQLPLYEIALLLGFNDSSNFRRAFRKWTGKLPSDYREAP.

An HTH araC/xylS-type domain is found at 241-338; it reads TRVRRLLLAR…GKLPSDYREA (98 aa). 2 consecutive DNA-binding regions (H-T-H motif) follow at residues 258-279 and 305-328; these read EQAA…SSLG and LYEI…RKWT.

In terms of biological role, probably activates the ArgJ gene that encodes ornithine acetyltransferase. Binds to its own promoter-operator region. Probably binds ornithine. The chain is Ornithine utilization regulator (oruR) from Pseudomonas aeruginosa (strain ATCC 15692 / DSM 22644 / CIP 104116 / JCM 14847 / LMG 12228 / 1C / PRS 101 / PAO1).